Here is a 215-residue protein sequence, read N- to C-terminus: Peptide methionine sulfoxide reductase MsrA (215 aa).

Residue cysteine 58 is part of the active site.

Belongs to the MsrA Met sulfoxide reductase family.

The enzyme catalyses L-methionyl-[protein] + [thioredoxin]-disulfide + H2O = L-methionyl-(S)-S-oxide-[protein] + [thioredoxin]-dithiol. The catalysed reaction is [thioredoxin]-disulfide + L-methionine + H2O = L-methionine (S)-S-oxide + [thioredoxin]-dithiol. In terms of biological role, has an important function as a repair enzyme for proteins that have been inactivated by oxidation. Catalyzes the reversible oxidation-reduction of methionine sulfoxide in proteins to methionine. The protein is Peptide methionine sulfoxide reductase MsrA of Pseudomonas aeruginosa (strain LESB58).